Reading from the N-terminus, the 374-residue chain is MTKHGAVVVPEDAVVAAAAVGRHFSFPPPRTGGVGGDSCKKLAAQQIDLGAAVIGSWLDSMKASSPRHRLVAPAVAAAAADAEHDEWMEKHPSALGKFEALAAAAKGKRIVVFLDYDGTLSPIVEDPDRAVMTDEMRDAVRGVAARFPTAIVSGRCRDKVLSFVGLEELYYAGSHGMDIQGPTNAAASKGGEEEEESVLCQPAREFLPMIGEAYAALVEKVEGVIPGAKVENNKFCLSVHFRRVDERRWGAVADQVRAVLRGYPRLRLTQGRKVLEVRPAIKWDKGEALRFLLSALGFSAAGDVEDDGDDDDAFPIYIGDDRTDEDAFRVLRARGHGAGILVSRFPKDTCASFSLRDPGEVKDFLRKLVTCAAA.

Belongs to the trehalose phosphatase family. Requires a divalent metal cation as cofactor.

It carries out the reaction alpha,alpha-trehalose 6-phosphate + H2O = alpha,alpha-trehalose + phosphate. The protein operates within glycan biosynthesis; trehalose biosynthesis. Functionally, removes the phosphate from trehalose 6-phosphate to produce free trehalose. Trehalose accumulation in plant may improve abiotic stress tolerance. The protein is Probable trehalose-phosphate phosphatase 9 (TPP9) of Oryza sativa subsp. japonica (Rice).